Reading from the N-terminus, the 570-residue chain is Ribosome-inactivating protein SNAIf (570 aa).

The N-terminal stretch at 1–28 is a signal peptide; that stretch reads MRVVTKLLYLVVLAICGLGIHGALTHTR. Residues Asn-40, Asn-62, and Asn-140 are each glycosylated (N-linked (GlcNAc...) asparagine). Glu-199 is an active-site residue. Asn-232 carries N-linked (GlcNAc...) asparagine glycosylation. Disulfide bonds link Cys-284-Cys-316, Cys-332-Cys-351, and Cys-373-Cys-385. Ricin B-type lectin domains are found at residues 319–439 and 441–566; these read VEVT…WTVG and VEPL…WITT. One copy of the 1-alpha repeat lies at 329 to 369; the sequence is DGLCVDVRDGHYIDGNTVQLGPCGNECNQLWTFRTDGTIRW. A 1-beta repeat occupies 370-405; sequence LGKCLTTSSSVMIYDCNTVPPEATKWVVSTDGTITN. The 1-gamma repeat unit spans residues 408–440; the sequence is SGLVLTAPQAAEGTALSLENNIHAARQGWTVGD. Residues 452–489 form a 2-alpha repeat; that stretch reads KQMCLTENGENNFVWLEDCVLNRVEQEWALYGDGTIRV. Residues Cys-455 and Cys-470 are joined by a disulfide bond. An N-linked (GlcNAc...) asparagine glycan is attached at Asn-492. One copy of the 2-beta repeat lies at 493–531; that stretch reads RSLCVTSEDHEPSDLIVILKCEGSGNQRWVFNTNGTISN. Cysteines 496 and 513 form a disulfide. N-linked (GlcNAc...) asparagine glycans are attached at residues Asn-526 and Asn-544. The 2-gamma repeat unit spans residues 534–567; it reads AKLVMDVAQSNVSLRKIILYPPTGNPNQQWITTT.

It belongs to the ribosome-inactivating protein family. Type 2 RIP subfamily. Tetramer of four pairs of disulfide bound A-B chains. Post-translationally, the precursor is processed in two chains, A and B, that are linked by a disulfide bond. A small truncated form corresponding roughly to the second ricin B-type lectin domain of the B chain, TrSNAIf, can also be produced. N-glycosylated. In terms of tissue distribution, expressed in fruits.

The enzyme catalyses Endohydrolysis of the N-glycosidic bond at one specific adenosine on the 28S rRNA.. In terms of biological role, neu5Ac(alpha2-6)Gal/GalNAc specific agglutinin. Behaves as a type-2 ribosome-inactivating protein. Strongly inhibits mammalian but not plant ribosomes. The A chain is responsible for inhibiting protein synthesis through the catalytic inactivation of 60S ribosomal subunits by removing adenine from position 4,324 of 28S rRNA. The B chain binds to cell receptors and probably facilitates the entry into the cell of the A chain; B chains are also responsible for cell agglutination (lectin activity). Involved in plant defense against insects. Binds Neu5Ac(alpha2-6)Gal/GalNAc but has no clear agglutination activity. In Sambucus nigra (European elder), this protein is Ribosome-inactivating protein SNAIf.